Consider the following 278-residue polypeptide: Small ribosomal subunit biogenesis GTPase RsgA (278 aa).

Positions 62 to 218 (KNTLVRPKVV…ICDTPGFNVI (157 aa)) constitute a CP-type G domain. Residues 112-115 (TKND) and 162-170 (GQSGVGKSS) contribute to the GTP site. Zn(2+) contacts are provided by Cys241, Cys246, His248, and Cys254.

This sequence belongs to the TRAFAC class YlqF/YawG GTPase family. RsgA subfamily. As to quaternary structure, monomer. Associates with 30S ribosomal subunit, binds 16S rRNA. Zn(2+) serves as cofactor.

Its subcellular location is the cytoplasm. One of several proteins that assist in the late maturation steps of the functional core of the 30S ribosomal subunit. Helps release RbfA from mature subunits. May play a role in the assembly of ribosomal proteins into the subunit. Circularly permuted GTPase that catalyzes slow GTP hydrolysis, GTPase activity is stimulated by the 30S ribosomal subunit. The sequence is that of Small ribosomal subunit biogenesis GTPase RsgA from Mycoplasma pneumoniae (strain ATCC 29342 / M129 / Subtype 1) (Mycoplasmoides pneumoniae).